Here is a 29-residue protein sequence, read N- to C-terminus: Cytolysin Oshem 1 (29 aa).

The protein resides in the secreted. It is found in the nematocyst. It localises to the target cell membrane. Its function is as follows. Cytolysin that shows moderate hemolysis and moderate myonecrosis. The protein is Cytolysin Oshem 1 of Olindias sambaquiensis (Hydromedusa).